We begin with the raw amino-acid sequence, 50 residues long: AEDSRGTQLHRALRKATKLSESTRCKRKGSSCRRTSYDCCTGSCRNGKCG.

Residue A1 is a signal peptide. A propeptide spanning residues E2 to R24 is cleaved from the precursor. 3 cysteine pairs are disulfide-bonded: C25–C40, C32–C44, and C39–C49. Position 49 is a cysteine amide (C49).

Belongs to the conotoxin O1 superfamily. In terms of tissue distribution, expressed by the venom duct.

It localises to the secreted. Omega-conotoxins act at presynaptic membranes, they bind and block voltage-gated calcium channels (Cav). This toxin selectively and potently inhibits depolarization-activated rat Cav2.2/CACNA1B currents (IC(50)=89 nM), when coexpressed with alpha-2/delta-1 (CACNA2D1) and beta-3 (CACNB3) subunits. In vivo, is lethal to fish and displays potent analgesic activity in mice pain models of hot plate and acetic acid writhing but has fewer side effects on mouse motor function and lower toxicity in goldfish. Shows higher or similar analgesic activity in the pain models mentioned above compared to MVIIA, and lower side effects. In addition, it blocks Cav2.2/CACNA1B more rapidly than MVIIA and also dissociates more rapidly. This is Omega-conotoxin Bu8 from Conus bullatus (Bubble cone).